The following is a 1320-amino-acid chain: Probable inactive ATP-dependent zinc metalloprotease FTSHI 5, chloroplastic (1320 aa).

The N-terminal 43 residues, 1–43 (MDFISASSLSSPFSTQLSPIYLSSGIVSLKPRHRVKNRNFGSR), are a transit peptide targeting the chloroplast. 3 helical membrane-spanning segments follow: residues 571–591 (LYLK…WIPM), 633–653 (NIND…IIPY), and 695–715 (FQWF…LYHV). Residue 824 to 831 (GERGTGKT) participates in ATP binding.

In the N-terminal section; belongs to the AAA ATPase family. The protein in the C-terminal section; belongs to the peptidase M41 family. In terms of assembly, oligomer.

Its subcellular location is the plastid. It is found in the chloroplast membrane. Its function is as follows. Required for plastid development during embryogenesis. Might be involved in chaperone functions or play a structural role in the thylakoid FtsH complex. This chain is Probable inactive ATP-dependent zinc metalloprotease FTSHI 5, chloroplastic, found in Arabidopsis thaliana (Mouse-ear cress).